Here is a 325-residue protein sequence, read N- to C-terminus: Natural cytotoxicity triggering receptor 1 (325 aa).

An N-terminal signal peptide occupies residues methionine 1–serine 16. Topologically, residues glutamine 17–asparagine 255 are extracellular. Ig-like domains follow at residues lysine 34–threonine 118 and tyrosine 129–threonine 211. A disulfide bridge connects residues cysteine 49 and cysteine 98. Residue asparagine 139 is glycosylated (N-linked (GlcNAc...) asparagine). The cysteines at positions 144 and 190 are disulfide-linked. N-linked (GlcNAc...) asparagine glycans are attached at residues asparagine 216 and asparagine 238. Residues leucine 256–leucine 273 form a helical membrane-spanning segment. The Cytoplasmic portion of the chain corresponds to threonine 274–leucine 325.

This sequence belongs to the natural cytotoxicity receptor (NCR) family. In terms of assembly, interacts with CD3Z and FCER1G. In terms of tissue distribution, selectively expressed by NK cells.

The protein localises to the cell membrane. Its function is as follows. Cytotoxicity-activating receptor that may contribute to the increased efficiency of activated natural killer (NK) cells to mediate tumor cell lysis. This is Natural cytotoxicity triggering receptor 1 (Ncr1) from Mus musculus (Mouse).